A 154-amino-acid polypeptide reads, in one-letter code: UPF0225 protein Spro_2712 (154 aa).

The protein belongs to the UPF0225 family.

This chain is UPF0225 protein Spro_2712, found in Serratia proteamaculans (strain 568).